Consider the following 371-residue polypeptide: MTMRVCKWLLTFALLFAATLTPAHSASRIKDVASLQAGRDNQLIGYGLVVGLQGTGDSLRSSPFTDQSIRAMLQNLGISTQGGESRTRNVAAVLVTATLPPFASPGSRVDVTVGSLGDATSLRGGTLVMTSLSGADGQIYAVAQGSIVVTGFSAQGDAASLSQGVTTAGRVPNGAIIERELPSKFKDGFNLVLQLRNPDFSTAVGMAAAINKFASAQFGGRIAEALDSQSVLVQKPKMADLARLMADIENLVVETDVPARVVVNERTGTIVIGQDVRVNEVAVSYGTLTVQVTETPTVVQPAPFSRGETAVEPNTTIEAQSDGGTVAILNGSSLRSLVAGLNSIGVKPDGIIAILQSIKTAGALQAELVLQ.

An N-terminal signal peptide occupies residues 1-25 (MTMRVCKWLLTFALLFAATLTPAHS).

Belongs to the FlgI family. The basal body constitutes a major portion of the flagellar organelle and consists of four rings (L,P,S, and M) mounted on a central rod.

The protein resides in the periplasm. The protein localises to the bacterial flagellum basal body. In terms of biological role, assembles around the rod to form the L-ring and probably protects the motor/basal body from shearing forces during rotation. The chain is Flagellar P-ring protein from Sinorhizobium fredii (strain NBRC 101917 / NGR234).